The primary structure comprises 420 residues: F-box protein At5g07610 (420 aa).

Positions 1 to 25 (MSSCSRTRTKAPRSARSRRNGGFSS) are disordered. Residues 7–19 (TRTKAPRSARSRR) are compositionally biased toward basic residues. Positions 27–77 (SATIVADIDDVLIQILSFLPIKTLLRFKRVSKRWLSLITNPVFSNRVIKSN) constitute an F-box domain.

The protein is F-box protein At5g07610 of Arabidopsis thaliana (Mouse-ear cress).